The chain runs to 219 residues: ATP synthase protein MI25 (219 aa).

The helical transmembrane segment at 29-49 threads the bilayer; it reads ISIYNEEMIVARCFIGFLILS.

Belongs to the ATPase protein MI25 family. In terms of assembly, F-type ATPases have 2 components, CF(1) - the catalytic core - and CF(0) - the membrane proton channel. CF(1) has five subunits: alpha(3), beta(3), gamma(1), delta(1), epsilon(1). CF(0) has three main subunits: a, b and c.

The protein resides in the mitochondrion membrane. In terms of biological role, this is one of the chains of the nonenzymatic component (CF(0) subunit) of the mitochondrial ATPase complex. In Zea mays (Maize), this protein is ATP synthase protein MI25.